We begin with the raw amino-acid sequence, 456 residues long: Bifunctional protein GlmU (456 aa).

The interval 1–228 is pyrophosphorylase; the sequence is MPQNTLNIVI…SYLAAGVNNK (228 aa). Residues 11-14, K25, Q75, 80-81, 102-104, G138, E153, N168, and N226 each bind UDP-N-acetyl-alpha-D-glucosamine; these read LAAG, GT, and YGD. D104 contributes to the Mg(2+) binding site. N226 provides a ligand contact to Mg(2+). Positions 229 to 249 are linker; sequence LQLAELERIFQTEQAQELLKA. The tract at residues 250–456 is N-acetyltransferase; that stretch reads GVTLSDPARF…GWVRPEKDKQ (207 aa). Residues R332 and K350 each contribute to the UDP-N-acetyl-alpha-D-glucosamine site. Residue H362 is the Proton acceptor of the active site. Residues Y365 and N376 each coordinate UDP-N-acetyl-alpha-D-glucosamine. Acetyl-CoA contacts are provided by residues A379, 385–386, S404, A422, and R439; that span reads NY.

This sequence in the N-terminal section; belongs to the N-acetylglucosamine-1-phosphate uridyltransferase family. It in the C-terminal section; belongs to the transferase hexapeptide repeat family. Homotrimer. The cofactor is Mg(2+).

Its subcellular location is the cytoplasm. It carries out the reaction alpha-D-glucosamine 1-phosphate + acetyl-CoA = N-acetyl-alpha-D-glucosamine 1-phosphate + CoA + H(+). The catalysed reaction is N-acetyl-alpha-D-glucosamine 1-phosphate + UTP + H(+) = UDP-N-acetyl-alpha-D-glucosamine + diphosphate. Its pathway is nucleotide-sugar biosynthesis; UDP-N-acetyl-alpha-D-glucosamine biosynthesis; N-acetyl-alpha-D-glucosamine 1-phosphate from alpha-D-glucosamine 6-phosphate (route II): step 2/2. It participates in nucleotide-sugar biosynthesis; UDP-N-acetyl-alpha-D-glucosamine biosynthesis; UDP-N-acetyl-alpha-D-glucosamine from N-acetyl-alpha-D-glucosamine 1-phosphate: step 1/1. It functions in the pathway bacterial outer membrane biogenesis; LPS lipid A biosynthesis. In terms of biological role, catalyzes the last two sequential reactions in the de novo biosynthetic pathway for UDP-N-acetylglucosamine (UDP-GlcNAc). The C-terminal domain catalyzes the transfer of acetyl group from acetyl coenzyme A to glucosamine-1-phosphate (GlcN-1-P) to produce N-acetylglucosamine-1-phosphate (GlcNAc-1-P), which is converted into UDP-GlcNAc by the transfer of uridine 5-monophosphate (from uridine 5-triphosphate), a reaction catalyzed by the N-terminal domain. The protein is Bifunctional protein GlmU of Neisseria meningitidis serogroup C / serotype 2a (strain ATCC 700532 / DSM 15464 / FAM18).